Reading from the N-terminus, the 380-residue chain is Cytochrome b (380 aa).

The next 4 membrane-spanning stretches (helical) occupy residues Phe34–Thr54, Trp78–Ile99, Trp114–Leu134, and Phe179–Thr199. His84 and His98 together coordinate heme b. The heme b site is built by His183 and His197. His202 serves as a coordination point for a ubiquinone. The next 4 helical transmembrane spans lie at Leu227–Ser247, Leu289–His309, Leu321–Ser341, and Phe348–Pro368.

This sequence belongs to the cytochrome b family. The cytochrome bc1 complex contains 11 subunits: 3 respiratory subunits (MT-CYB, CYC1 and UQCRFS1), 2 core proteins (UQCRC1 and UQCRC2) and 6 low-molecular weight proteins (UQCRH/QCR6, UQCRB/QCR7, UQCRQ/QCR8, UQCR10/QCR9, UQCR11/QCR10 and a cleavage product of UQCRFS1). This cytochrome bc1 complex then forms a dimer. Requires heme b as cofactor.

The protein localises to the mitochondrion inner membrane. Component of the ubiquinol-cytochrome c reductase complex (complex III or cytochrome b-c1 complex) that is part of the mitochondrial respiratory chain. The b-c1 complex mediates electron transfer from ubiquinol to cytochrome c. Contributes to the generation of a proton gradient across the mitochondrial membrane that is then used for ATP synthesis. The sequence is that of Cytochrome b (MT-CYB) from Uria aalge (Common mure).